The following is a 1178-amino-acid chain: DNA-directed RNA polymerase I subunit 2 (1178 aa).

Residues 1097 to 1137 (CSLCGSLLTSSVVNVQQKKLIQEIGKLPPGRTPKKVTCYSC) form a C4-type zinc finger.

The protein belongs to the RNA polymerase beta chain family. Component of the RNA polymerase I (Pol I) complex consisting of at least 13 subunits.

The protein localises to the nucleus. The enzyme catalyses RNA(n) + a ribonucleoside 5'-triphosphate = RNA(n+1) + diphosphate. Functionally, DNA-dependent RNA polymerase catalyzes the transcription of DNA into RNA using the four ribonucleoside triphosphates as substrates. Second largest core component of RNA polymerase I which synthesizes ribosomal RNA precursors. Proposed to contribute to the polymerase catalytic activity and forms the polymerase active center together with the largest subunit. Pol I is composed of mobile elements and NRPA2 is part of the core element with the central large cleft and probably a clamp element that moves to open and close the cleft. In terms of biological role, essential for the completion of the three rounds of mitosis in female megaspores required for the development of mature gametophytes. This is DNA-directed RNA polymerase I subunit 2 from Arabidopsis thaliana (Mouse-ear cress).